The primary structure comprises 194 residues: Xanthine phosphoribosyltransferase (194 aa).

Leu-20 and Asn-27 together coordinate xanthine. Position 128–132 (128–132 (ANGCA)) interacts with 5-phospho-alpha-D-ribose 1-diphosphate. Lys-156 is a xanthine binding site.

Belongs to the purine/pyrimidine phosphoribosyltransferase family. Xpt subfamily. In terms of assembly, homodimer.

The protein localises to the cytoplasm. It catalyses the reaction XMP + diphosphate = xanthine + 5-phospho-alpha-D-ribose 1-diphosphate. It functions in the pathway purine metabolism; XMP biosynthesis via salvage pathway; XMP from xanthine: step 1/1. Its function is as follows. Converts the preformed base xanthine, a product of nucleic acid breakdown, to xanthosine 5'-monophosphate (XMP), so it can be reused for RNA or DNA synthesis. This is Xanthine phosphoribosyltransferase from Lachnoclostridium phytofermentans (strain ATCC 700394 / DSM 18823 / ISDg) (Clostridium phytofermentans).